The chain runs to 95 residues: MSLSLDDVKRVANLARIEISEDEARKALIQLSGIFGLIEQMQAVDVSAITPMSHAQDVMQRLRADGATEIDQRELFQSVAPQVEAGLYLVPKVIE.

This sequence belongs to the GatC family. As to quaternary structure, heterotrimer of A, B and C subunits.

The enzyme catalyses L-glutamyl-tRNA(Gln) + L-glutamine + ATP + H2O = L-glutaminyl-tRNA(Gln) + L-glutamate + ADP + phosphate + H(+). It catalyses the reaction L-aspartyl-tRNA(Asn) + L-glutamine + ATP + H2O = L-asparaginyl-tRNA(Asn) + L-glutamate + ADP + phosphate + 2 H(+). Allows the formation of correctly charged Asn-tRNA(Asn) or Gln-tRNA(Gln) through the transamidation of misacylated Asp-tRNA(Asn) or Glu-tRNA(Gln) in organisms which lack either or both of asparaginyl-tRNA or glutaminyl-tRNA synthetases. The reaction takes place in the presence of glutamine and ATP through an activated phospho-Asp-tRNA(Asn) or phospho-Glu-tRNA(Gln). The sequence is that of Aspartyl/glutamyl-tRNA(Asn/Gln) amidotransferase subunit C from Nitrosospira multiformis (strain ATCC 25196 / NCIMB 11849 / C 71).